The sequence spans 556 residues: U3 small nucleolar RNA-associated protein 18 homolog (556 aa).

Basic residues predominate over residues 1–24 (MPPERRRRMKLDRRTGAKPKRKPG). Positions 1–70 (MPPERRRRMK…IAVAAAEEER (70 aa)) are disordered. Low complexity predominate over residues 43-65 (APSSQRKPPARPSAAAAAIAVAA). A Glycyl lysine isopeptide (Lys-Gly) (interchain with G-Cter in SUMO2) cross-link involves residue lysine 84. Residues 111 to 143 (RGPRVQEHEDSGDSEVENEAKGNFPPQKKPVWV) are disordered. Phosphoserine occurs at positions 121 and 124. Residues lysine 183 and lysine 201 each participate in a glycyl lysine isopeptide (Lys-Gly) (interchain with G-Cter in SUMO2) cross-link. The interval 193 to 219 (VPAWAETTKRKTSSDDESEEDEDDLLQ) is disordered. Threonine 204 bears the Phosphothreonine mark. Serine 205, serine 206, and serine 210 each carry phosphoserine. Residues 207–216 (DDESEEDEDD) are compositionally biased toward acidic residues. Residue threonine 221 is modified to Phosphothreonine. WD repeat units lie at residues 249-288 (PTVA…NPKI), 293-333 (LERF…LIPV), 339-380 (LKEK…GSMK), 381-419 (INGR…CLNR), 421-462 (VDEG…QETN), and 471-512 (NLVT…VFSN). A Glycyl lysine isopeptide (Lys-Gly) (interchain with G-Cter in SUMO2) cross-link involves residue lysine 517.

The protein belongs to the WD repeat UTP18 family. As to quaternary structure, part of the small subunit (SSU) processome, composed of more than 70 proteins and the RNA chaperone small nucleolar RNA (snoRNA) U3.

It is found in the nucleus. The protein resides in the nucleolus. Part of the small subunit (SSU) processome, first precursor of the small eukaryotic ribosomal subunit. During the assembly of the SSU processome in the nucleolus, many ribosome biogenesis factors, an RNA chaperone and ribosomal proteins associate with the nascent pre-rRNA and work in concert to generate RNA folding, modifications, rearrangements and cleavage as well as targeted degradation of pre-ribosomal RNA by the RNA exosome. Involved in nucleolar processing of pre-18S ribosomal RNA. In Homo sapiens (Human), this protein is U3 small nucleolar RNA-associated protein 18 homolog.